The chain runs to 269 residues: Diaminopimelate epimerase (269 aa).

The substrate site is built by Asn13, Gln46, and Asn65. The active-site Proton donor is Cys74. Residues 75–76 (GN), Asn149, Asn182, and 200–201 (ER) contribute to the substrate site. Residue Cys209 is the Proton acceptor of the active site. Substrate is bound at residue 210–211 (GT).

It belongs to the diaminopimelate epimerase family. As to quaternary structure, homodimer.

The protein resides in the cytoplasm. It catalyses the reaction (2S,6S)-2,6-diaminopimelate = meso-2,6-diaminopimelate. Its pathway is amino-acid biosynthesis; L-lysine biosynthesis via DAP pathway; DL-2,6-diaminopimelate from LL-2,6-diaminopimelate: step 1/1. In terms of biological role, catalyzes the stereoinversion of LL-2,6-diaminopimelate (L,L-DAP) to meso-diaminopimelate (meso-DAP), a precursor of L-lysine and an essential component of the bacterial peptidoglycan. The polypeptide is Diaminopimelate epimerase (Zymomonas mobilis subsp. mobilis (strain ATCC 31821 / ZM4 / CP4)).